The primary structure comprises 403 residues: S-adenosylmethionine synthase (403 aa).

H17 is an ATP binding site. D19 serves as a coordination point for Mg(2+). E45 contacts K(+). Positions 58 and 104 each coordinate L-methionine. The segment at 104 to 114 is flexible loop; that stretch reads QSPDIAQGVDT. Residues 179–181, 250–251, D259, 265–266, A282, and K286 each bind ATP; these read DGK, KF, and RK. D259 provides a ligand contact to L-methionine. K290 serves as a coordination point for L-methionine.

The protein belongs to the AdoMet synthase family. In terms of assembly, homotetramer; dimer of dimers. It depends on Mg(2+) as a cofactor. The cofactor is K(+).

Its subcellular location is the cytoplasm. It carries out the reaction L-methionine + ATP + H2O = S-adenosyl-L-methionine + phosphate + diphosphate. Its pathway is amino-acid biosynthesis; S-adenosyl-L-methionine biosynthesis; S-adenosyl-L-methionine from L-methionine: step 1/1. Functionally, catalyzes the formation of S-adenosylmethionine (AdoMet) from methionine and ATP. The overall synthetic reaction is composed of two sequential steps, AdoMet formation and the subsequent tripolyphosphate hydrolysis which occurs prior to release of AdoMet from the enzyme. The protein is S-adenosylmethionine synthase of Mycobacterium bovis (strain BCG / Pasteur 1173P2).